The primary structure comprises 875 residues: MSRHHSRFERDYRVGWDRREWSVNGTHGTTSICSVTSGAGGGTASSLSVRPGLLPLPVVPSRLPTPATAPAPCTTGSSEAITSLVASSASAVTTKAPGISKGDSQSQGLATSIRWGQTPINQSTPWDTDEPPSKQMRESDNPGTGPWVTTVAAGNQPTLIAHSYGVAQPPTFSPAVNVQAPVIGVTPSLPPHVGPQLPLMPGHYSLPQPPSQPLSSVVVNMPAQALYASPQPLAVSTLPGVGQVARPGPTAVGNGHMAGPLLPPPPPAQPSATLPSGAPATNGPPTTDSAHGLQMLRTIGVGKYEFTDPGHPREMLKELNQQRRAKAFTDLKIVVEGREFEVHQNVLASCSLYFKDLIQRSVQDSGQGGREKLELVLSNLQADVLELLLEFVYTGSLVIDSANAKTLLEAASKFQFHTFCKVCVSFLEKQLTASNCLGVLAMAEAMQCSELYHMAKAFALQIFPEVAAQEEILSISKDDFIAYVSNDSLNTKAEELVYETVIKWIKKDPATRTQYAAELLAVVRLPFIHPSYLLNVVDNEELIKSSEACRDLVNEAKRYHMLPHARQEMQTPRTRPRLSAGVAEVIVLVGGRQMVGMTQRSLVAVTCWNPQNNKWYPLASLPFYDREFFSVVSAGDNIYLSGGMESGVTLADVWCYMSLLDNWNLVSRMTVPRCRHNSLVYDGKIYTLGGLGVAGNVDHVERYDTITNQWEAVAPLPKAVHSAAATVCGGKIYVFGGVNEAGRAAGVLQSYVPQTNTWSFIESPMIDNKYAPAVTLNGFVFILGGAYARATTIYDPEKGNIKAGPNMNHSRQFCSAVVLDGKIYATGGIVSSEGPALGNMEAYEPTTNTWTLLPHMPCPVFRHGCVVIKKYIQSG.

A compositionally biased stretch (polar residues) spans 115-126; sequence WGQTPINQSTPW. Disordered regions lie at residues 115-145 and 248-291; these read WGQT…PGTG and GPTA…DSAH. The span at 131–140 shows a compositional bias: basic and acidic residues; it reads PPSKQMRESD. In terms of domain architecture, BTB spans 329-401; it reads TDLKIVVEGR…VYTGSLVIDS (73 aa). Kelch repeat units lie at residues 585–635, 637–683, 684–730, 732–778, 779–821, and 822–870; these read VIVL…VSAG, NIYL…VYDG, KIYT…VCGG, IYVF…TLNG, FVFI…VLDG, and KIYA…VIKK.

The protein is Kelch-like protein 29 (KLHL29) of Homo sapiens (Human).